The sequence spans 181 residues: uncharacterized protein (181 aa).

This is an uncharacterized protein from Methanocaldococcus jannaschii (strain ATCC 43067 / DSM 2661 / JAL-1 / JCM 10045 / NBRC 100440) (Methanococcus jannaschii).